Reading from the N-terminus, the 62-residue chain is Conotoxin TeAr151 (62 aa).

A signal peptide spans 1–22 (MRCLPVFVVLLLLIASAPSVDA). A propeptide spanning residues 23-47 (QPKTKDDVPLAPLHDNIQNTLQTLR) is cleaved from the precursor. Met-55 is subject to Methionine sulfoxide; partial. Serine amide is present on Ser-60.

This sequence belongs to the conotoxin T superfamily. Post-translationally, contains 2 disulfide bonds. In terms of processing, contains 2 disulfide bonds that can be either 'C1-C3, C2-C4' or 'C1-C4, C2-C3', since these disulfide connectivities have been observed for conotoxins with cysteine framework V (for examples, see AC P0DQQ7 and AC P81755).. As to expression, expressed by the venom duct. Is mostly present in part 5 of the venom duct (distal part near the pharynx), and less abundantly present in part 4 of the venom duct.

It is found in the secreted. This is Conotoxin TeAr151 from Conus textile (Cloth-of-gold cone).